The primary structure comprises 530 residues: Capsid protein VP1 (530 aa).

The disordered stretch occupies residues 1–20 (MMMASKDATSSVDGASGAGQ). Residues 1–225 (MMMASKDATS…FLFLVPPTVE (225 aa)) form a shell domain region. The tract at residues 226–278 (QKTRPFTLPNLPLSSLSNSRAPLPISSMGISPDNVQSVQFQNGRCTLDGRLVG) is P1 sub-domain 1. Positions 226–530 (QKTRPFTLPN…SARGRLGLRR (305 aa)) are protruding domain. The tract at residues 279-405 (TTPVSLSHVA…GSSITEATHL (127 aa)) is P2 sub-domain. Residues 406 to 530 (APSVYPPGFG…SARGRLGLRR (125 aa)) are P1 sub-domain 2. Positions 523–530 (RGRLGLRR) are plays a role in binding to host histo-blood group structures antigens and in the formation of P-particles.

It belongs to the caliciviridae capsid protein family. As to quaternary structure, homodimer. Homomultimer. Interacts with the minor capsid protein VP2. Interacts (via C-terminus) with host type I histo-blood group structures antigens at the surface of target cells. In terms of processing, may be cleaved by host protease to generate soluble capsid protein. Assembled capsid cannot be cleaved.

The protein localises to the virion. It localises to the host cytoplasm. In terms of biological role, capsid protein self assembles to form an icosahedral capsid with a T=3 symmetry, about 38 nm in diameter, and consisting of 180 capsid proteins. A smaller form of capsid with a diameter of 23 nm might be capsid proteins assembled as icosahedron with T=1 symmetry. The capsid encapsulates the genomic RNA and is decorated with VP2 proteins. Attaches virion to target cells by binding histo-blood group antigens (HBGAs) present on gastroduodenal epithelial cells. Its function is as follows. The soluble capsid protein may play a role in viral immunoevasion. The chain is Capsid protein VP1 from Norovirus (strain Human/NoV/United States/Norwalk/1968/GI) (Hu/NV/NV/1968/US).